The chain runs to 203 residues: RNA annealing protein YRA2 (203 aa).

M1 carries the post-translational modification N-acetylmethionine. Disordered stretches follow at residues 1 to 60 and 134 to 203; these read MDKA…REEP and EIYQ…YMKG. The segment covering 11–20 has biased composition (polar residues); sequence NSHTDSSSNH. A compositionally biased stretch (basic and acidic residues) spans 47–60; sequence SRSKDRLYREREEP. Residues 64 to 138 enclose the RRM domain; it reads KRIRISKIPL…AKIEVEIYQP (75 aa). 2 stretches are compositionally biased toward basic residues: residues 139 to 153 and 163 to 180; these read QRKH…RRKQ and PGSH…KNKG.

The protein belongs to the YRA1 family. Associates with mRNPs. Interacts with YRA1.

Its subcellular location is the nucleus. Its function is as follows. Involved in export of poly(A) mRNAs from the nucleus. Recruited to the coding sequences as well as poly-A sites of active genes. The protein is RNA annealing protein YRA2 (YRA2) of Saccharomyces cerevisiae (strain RM11-1a) (Baker's yeast).